Here is a 295-residue protein sequence, read N- to C-terminus: Methionine aminopeptidase (295 aa).

His62 is a substrate binding site. A divalent metal cation contacts are provided by Asp82, Asp93, and His153. His161 contributes to the substrate binding site. A divalent metal cation contacts are provided by Glu187 and Glu280.

Monomer. It depends on Co(2+) as a cofactor. Requires Zn(2+) as cofactor. The cofactor is Mn(2+). Fe(2+) serves as cofactor.

The catalysed reaction is Release of N-terminal amino acids, preferentially methionine, from peptides and arylamides.. Its function is as follows. Removes the N-terminal methionine from nascent proteins. The N-terminal methionine is often cleaved when the second residue in the primary sequence is small and uncharged (Met-Ala-, Cys, Gly, Pro, Ser, Thr, or Val). This Pyrococcus furiosus (strain ATCC 43587 / DSM 3638 / JCM 8422 / Vc1) protein is Methionine aminopeptidase.